The sequence spans 299 residues: Nicotinate-nucleotide pyrophosphorylase [carboxylating] (299 aa).

Residues 8-12 (HLLPP) are important for hexamer formation. Quinolinate is bound by residues Arg102, 138-139 (RK), 160-161 (HR), Lys171, Glu201, Asp222, 248-250 (SGG), and Gly270. Thr291 is subject to Phosphothreonine.

It belongs to the NadC/ModD family. Hexamer formed by 3 homodimers.

It carries out the reaction nicotinate beta-D-ribonucleotide + CO2 + diphosphate = quinolinate + 5-phospho-alpha-D-ribose 1-diphosphate + 2 H(+). It functions in the pathway cofactor biosynthesis; NAD(+) biosynthesis; nicotinate D-ribonucleotide from quinolinate: step 1/1. Involved in the catabolism of quinolinic acid (QA). The sequence is that of Nicotinate-nucleotide pyrophosphorylase [carboxylating] (QPRT) from Bos taurus (Bovine).